A 325-amino-acid polypeptide reads, in one-letter code: Phosphate acyltransferase (325 aa).

The protein belongs to the PlsX family. As to quaternary structure, homodimer. Probably interacts with PlsY.

The protein localises to the cytoplasm. The enzyme catalyses a fatty acyl-[ACP] + phosphate = an acyl phosphate + holo-[ACP]. It functions in the pathway lipid metabolism; phospholipid metabolism. Its function is as follows. Catalyzes the reversible formation of acyl-phosphate (acyl-PO(4)) from acyl-[acyl-carrier-protein] (acyl-ACP). This enzyme utilizes acyl-ACP as fatty acyl donor, but not acyl-CoA. The chain is Phosphate acyltransferase from Staphylococcus epidermidis (strain ATCC 12228 / FDA PCI 1200).